A 59-amino-acid polypeptide reads, in one-letter code: uncharacterized protein (59 aa).

The chain crosses the membrane as a helical span at residues 6-26; the sequence is WWLVVFAVFVFLFDTLLMQWI.

It is found in the membrane. This is an uncharacterized protein from Escherichia coli O157:H7.